Consider the following 749-residue polypeptide: Disintegrin and metalloproteinase domain-containing protein 10 (749 aa).

A signal peptide spans 1 to 18 (MGLLRLVFLLSWAASAGG). Positions 19–213 (LYGNPLNKYI…SGPVILRKKR (195 aa)) are excised as a propeptide. At 19-673 (LYGNPLNKYI…NPELYENIAE (655 aa)) the chain is on the extracellular side. Residues 170-177 (GGCADSSV) carry the Cysteine switch motif. Cys172 contacts Zn(2+). Residues 220-457 (NTCQLFIQTD…KENSCFVESG (238 aa)) enclose the Peptidase M12B domain. Disulfide bonds link Cys222-Cys314, Cys345-Cys452, Cys400-Cys436, Cys461-Cys496, Cys472-Cys485, Cys474-Cys480, Cys484-Cys516, Cys504-Cys512, Cys511-Cys537, Cys525-Cys544, Cys531-Cys563, Cys556-Cys568, Cys573-Cys599, Cys581-Cys608, Cys583-Cys598, Cys595-Cys640, and Cys633-Cys646. Asn268 and Asn279 each carry an N-linked (GlcNAc...) asparagine glycan. Residue His384 participates in Zn(2+) binding. Glu385 is an active-site residue. 2 residues coordinate Zn(2+): His388 and His394. N-linked (GlcNAc...) asparagine glycosylation occurs at Asn440. Positions 458 to 552 (QPICGNGLVE…QCPPSEPREN (95 aa)) constitute a Disintegrin domain. N-linked (GlcNAc...) asparagine glycosylation occurs at Asn552. The helical transmembrane segment at 674–694 (WIVAHWWAVLLMGIALIMLMA) threads the bilayer. Over 695–749 (GFIKICSVHTPSSNPKLPPPKPLPGTLKRRRPPQTTQQPSRQRPRENYQMGHMRH) the chain is Cytoplasmic. The tract at residues 705–749 (PSSNPKLPPPKPLPGTLKRRRPPQTTQQPSRQRPRENYQMGHMRH) is disordered. The SH3-binding motif lies at 709 to 716 (PKLPPPKP). Thr720 bears the Phosphothreonine mark. The short motif at 723–729 (RRRPPQT) is the SH3-binding element.

Requires Zn(2+) as cofactor. Post-translationally, the precursor is cleaved by furin and PCSK7.

Its subcellular location is the membrane. It carries out the reaction Endopeptidase of broad specificity.. Functionally, controls the proteolytic processing of Notch and mediates lateral inhibition during neurogenesis. This chain is Disintegrin and metalloproteinase domain-containing protein 10 (adam10), found in Xenopus laevis (African clawed frog).